The following is a 381-amino-acid chain: MALNIRKTHPLLKIVNQTLIDLPAPSNISVWWNFGSLLGLCLIIQIVTGLFLAMHYTADISLAFSSVVHICRDVNYGWLIRNIHANGASLFFVCIYFHIARGLYYGSYLYKETWNIGVILLFLLMATAFVGYVLPWGQMSFWGATVITNLLSAFPYVGDVLVQWIWGGFSVDNATLTRFFAFHFLLPFLITALMIIHVLFLHETGSNNPMGLNSDMDKISFHPYFSYKDALGFLTLLILLGVLALFLPNLLGEAENFIPANPLVTPPHIKPEWYFLFAYAILRSIPNKLGGVLALLFSILILMLVPFLHTSKQRSSTFRPLTQIFFWTLVTNMLILTWIGGQPVEQPFILIGQIASISYFSLFLIALPLAGWWENKILNLN.

Helical transmembrane passes span 34 to 54, 78 to 99, 114 to 134, and 179 to 199; these read FGSL…FLAM, WLIR…YFHI, WNIG…GYVL, and FFAF…IHVL. The heme b site is built by H84 and H98. H183 and H197 together coordinate heme b. H202 is an a ubiquinone binding site. The next 4 helical transmembrane spans lie at 227–247, 289–309, 321–341, and 348–368; these read YKDA…ALFL, LGGV…PFLH, LTQI…WIGG, and FILI…IALP.

The protein belongs to the cytochrome b family. As to quaternary structure, the cytochrome bc1 complex contains 3 respiratory subunits (MT-CYB, CYC1 and UQCRFS1), 2 core proteins (UQCRC1 and UQCRC2) and probably 6 low-molecular weight proteins. Heme b serves as cofactor.

The protein resides in the mitochondrion inner membrane. Component of the ubiquinol-cytochrome c reductase complex (complex III or cytochrome b-c1 complex) that is part of the mitochondrial respiratory chain. The b-c1 complex mediates electron transfer from ubiquinol to cytochrome c. Contributes to the generation of a proton gradient across the mitochondrial membrane that is then used for ATP synthesis. The sequence is that of Cytochrome b (mt-cyb) from Isurus oxyrinchus (Shortfin mako shark).